The following is a 208-amino-acid chain: RNA chaperone ProQ (208 aa).

Composition is skewed to basic and acidic residues over residues 99-115 (AQETLKESKAKVAEKNK) and 126-135 (PAKDKPENTA). Positions 99-149 (AQETLKESKAKVAEKNKATNKAAAKKAPAKDKPENTAKAKPKTAKKPAKPK) are disordered. Residues 137–149 (AKPKTAKKPAKPK) show a composition bias toward basic residues.

This sequence belongs to the ProQ family.

Its subcellular location is the cytoplasm. In terms of biological role, RNA chaperone with significant RNA binding, RNA strand exchange and RNA duplexing activities. This Idiomarina loihiensis (strain ATCC BAA-735 / DSM 15497 / L2-TR) protein is RNA chaperone ProQ.